The primary structure comprises 54 residues: Large ribosomal subunit protein bL33A (54 aa).

It belongs to the bacterial ribosomal protein bL33 family.

This chain is Large ribosomal subunit protein bL33A, found in Saccharopolyspora erythraea (strain ATCC 11635 / DSM 40517 / JCM 4748 / NBRC 13426 / NCIMB 8594 / NRRL 2338).